We begin with the raw amino-acid sequence, 280 residues long: Tumor necrosis factor ligand superfamily member 6 (280 aa).

Topologically, residues 1 to 80 (MQQPFNYPYP…KKRGNHSTGL (80 aa)) are cytoplasmic. A disordered region spans residues 20-70 (SSPWAPPGTVLPCPTSVPRRPGQRRPPPPPPPPPLPPPPPSPLPPLPLPPL). Pro residues predominate over residues 43–69 (RRPPPPPPPPPLPPPPPSPLPPLPLPP). The helical; Signal-anchor for type II membrane protein transmembrane segment at 81–101 (CLLVMFFMVLVALVGLGLGMF) threads the bilayer. At 102-280 (QLFHLQKELA…SQTFFGLYKL (179 aa)) the chain is on the extracellular side. The segment at 117 to 155 (TSQKHTASSLEKQIGHPSPPPEKKEQRKVAHLTGKPNSR) is disordered. Residues 144–280 (KVAHLTGKPN…SQTFFGLYKL (137 aa)) enclose the THD domain. The N-linked (GlcNAc...) asparagine glycan is linked to asparagine 183. A disulfide bridge connects residues cysteine 201 and cysteine 232. Residues asparagine 249 and asparagine 259 are each glycosylated (N-linked (GlcNAc...) asparagine).

This sequence belongs to the tumor necrosis factor family. As to quaternary structure, homotrimer. Interacts with ARHGAP9, BAIAP2L1, BTK, CACNB3, CACNB4, CRK, DLG2, DNMBP, DOCK4, EPS8L3, FGR, FYB1, FYN, HCK, ITK, ITSN2, KALRN, LYN, MACC1, MIA, MPP4, MYO15A, NCF1, NCK1, NCK2, NCKIPSD, OSTF1, PIK3R1, PSTPIP1, RIMBP3C, SAMSN1, SH3GL3, SH3PXD2B, SH3PXD2A, SH3RF2, SKAP2, SNX33, SNX9, SORBS3, SPTA1, SRC, SRGAP1, SRGAP2, SRGAP3, TEC, TJP3 and YES1. The soluble form derives from the membrane form by proteolytic processing. The membrane-bound form undergoes two successive intramembrane proteolytic cleavages. The first one is processed by ADAM10 producing an N-terminal fragment, which lacks the receptor-binding extracellular domain. This ADAM10-processed FasL (FasL APL) remnant form is still membrane anchored and further processed by SPPL2A that liberates the FasL intracellular domain (FasL ICD). FasL shedding by ADAM10 is a prerequisite for subsequent intramembrane cleavage by SPPL2A in T-cells. Post-translationally, phosphorylated by FGR on tyrosine residues; this is required for ubiquitination and subsequent internalization. In terms of processing, N-glycosylated. Glycosylation enhances apoptotic activity. Monoubiquitinated.

The protein resides in the cell membrane. It localises to the cytoplasmic vesicle lumen. Its subcellular location is the lysosome lumen. The protein localises to the secreted. It is found in the nucleus. Cytokine that binds to TNFRSF6/FAS, a receptor that transduces the apoptotic signal into cells. Involved in cytotoxic T-cell-mediated apoptosis, natural killer cell-mediated apoptosis and in T-cell development. Initiates fratricidal/suicidal activation-induced cell death (AICD) in antigen-activated T-cells contributing to the termination of immune responses. TNFRSF6/FAS-mediated apoptosis has also a role in the induction of peripheral tolerance. Binds to TNFRSF6B/DcR3, a decoy receptor that blocks apoptosis. In terms of biological role, induces FAS-mediated activation of NF-kappa-B, initiating non-apoptotic signaling pathways. Can induce apoptosis but does not appear to be essential for this process. Its function is as follows. Cytoplasmic form induces gene transcription inhibition. This is Tumor necrosis factor ligand superfamily member 6 (FASLG) from Macaca fascicularis (Crab-eating macaque).